Consider the following 619-residue polypeptide: Lysophospholipid acyltransferase (619 aa).

At 1 to 19 (MYNPVDAVLTKIITNYGID) the chain is on the lumenal side. Residues 20–39 (SFTLRYAICLLGSFPLNAIL) form a helical membrane-spanning segment. Over 40–51 (KRIPEKRIGLKC) the chain is Cytoplasmic. A helical transmembrane segment spans residues 52–72 (CFIISMSMFYLFGVLNLVSGF). Topologically, residues 73–92 (RTLFISTMFTYLISRFYRSK) are lumenal. Residues 93–113 (FMPHLNFMFVMGHLAINHIHA) form a helical membrane-spanning segment. Residues 114 to 231 (QFLNEQTQTT…GERRQIPKNG (118 aa)) are Cytoplasmic-facing. D146 serves as the catalytic Nucleophile. The chain crosses the membrane as a helical span at residues 232–252 (KLALWKVVQGLAWMILSTLGM). At 253–274 (KHFPVKYVLDKDGFPTRSFIFR) the chain is on the lumenal side. The chain crosses the membrane as a helical span at residues 275–295 (IHYLFLLGFIHRFKYYAAWTI). Residues 296 to 429 (SEGSCILCGL…TPLPSKKIYD (134 aa)) lie on the Cytoplasmic side of the membrane. Catalysis depends on E297, which acts as the Nucleophile. The active site involves H382. Residues 430–450 (LVGIYAIKLAFGYMVQPFIIL) form a helical membrane-spanning segment. Topologically, residues 451–456 (DLKPSL) are lumenal. A helical transmembrane segment spans residues 457 to 477 (MVWGSVYFYVHIIVAFSFFLF). Over 478-619 (RGPYAKQVTE…SPKPISKKEE (142 aa)) the chain is Cytoplasmic. S513 carries the post-translational modification Phosphoserine. The stretch at 545–593 (ELEKWDNAKEDWEDFCKDYKEWRNKNGLEIEEENLSKAFERFKQEFSNA) forms a coiled coil. Residues 592-619 (NAASGSGERVRKMSFSGYSPKPISKKEE) form a disordered region. 3 positions are modified to phosphoserine: S605, S610, and S615.

This sequence belongs to the membrane-bound acyltransferase family.

The protein resides in the endoplasmic reticulum membrane. It carries out the reaction a 1-acyl-sn-glycero-3-phosphate + an acyl-CoA = a 1,2-diacyl-sn-glycero-3-phosphate + CoA. The enzyme catalyses a 1-acyl-sn-glycero-3-phosphocholine + an acyl-CoA = a 1,2-diacyl-sn-glycero-3-phosphocholine + CoA. The catalysed reaction is 1-acyl-sn-glycero-3-phospho-(1'-sn-glycerol) + an acyl-CoA = a 1,2-diacyl-sn-glycero-3-phospho-(1'-sn-glycerol) + CoA. It catalyses the reaction a 1-acyl-sn-glycero-3-phospho-(1D-myo-inositol) + an acyl-CoA = a 1,2-diacyl-sn-glycero-3-phospho-(1D-myo-inositol) + CoA. It carries out the reaction a 1-acyl-sn-glycero-3-phospho-L-serine + an acyl-CoA = a 1,2-diacyl-sn-glycero-3-phospho-L-serine + CoA. The enzyme catalyses a 1-acyl-sn-glycero-3-phosphoethanolamine + an acyl-CoA = a 1,2-diacyl-sn-glycero-3-phosphoethanolamine + CoA. The catalysed reaction is 1-(9Z-octadecenoyl)-sn-glycero-3-phosphoethanolamine + (9Z)-octadecenoyl-CoA = 1,2-di-(9Z-octadecenoyl)-sn-glycero-3-phosphoethanolamine + CoA. It catalyses the reaction 1-(9Z-octadecenoyl)-sn-glycero-3-phosphoethanolamine + (9Z)-hexadecenoyl-CoA = 1-(9Z)-octadecenoyl-2-(9Z)-hexadecenoyl-sn-glycero-3-phosphoethanolamine + CoA. It carries out the reaction 1-(9Z-octadecenoyl)-sn-glycero-3-phosphoethanolamine + hexadecanoyl-CoA = 1-(9Z-octadecenoyl)-2-hexadecanoyl-sn-glycero-3-phosphoethanolamine + CoA. The enzyme catalyses 1-(9Z-octadecenoyl)-sn-glycero-3-phosphoethanolamine + tetradecanoyl-CoA = 1-(9Z)-octadecenoyl-2-tetradecanoyl-sn-glycero-3-phosphoethanolamine + CoA. The catalysed reaction is 1-(9Z-octadecenoyl)-sn-glycero-3-phosphate + (9Z)-octadecenoyl-CoA = 1,2-di-(9Z-octadecenoyl)-sn-glycero-3-phosphate + CoA. It catalyses the reaction (9Z)-hexadecenoyl-CoA + 1-hexadecanoyl-sn-glycero-3-phosphocholine = 1-hexadecanoyl-2-(9Z-hexadecenoyl)-sn-glycero-3-phosphocholine + CoA. It carries out the reaction 1-hexadecanoyl-sn-glycero-3-phosphocholine + (9Z)-octadecenoyl-CoA = 1-hexadecanoyl-2-(9Z-octadecenoyl)-sn-glycero-3-phosphocholine + CoA. The enzyme catalyses 1-tetradecanoyl-sn-glycero-3-phosphoethanolamine + (9Z)-octadecenoyl-CoA = 1-tetradecanoyl-2-(9Z-octadecenoyl)-sn-glycero-3-phosphoethanolamine + CoA. The catalysed reaction is 1-(9Z-octadecenoyl)-sn-glycero-3-phospho-L-serine + (9Z)-octadecenoyl-CoA = 1,2-di-(9Z)-octadecenoyl-sn-glycero-3-phospho-L-serine + CoA. It catalyses the reaction a 1-acyl-sn-glycero-3-phospho-(1D-myo-inositol) + (9Z)-octadecenoyl-CoA = a 1-acyl-2-(9Z-octadecenoyl)-sn-glycero-3-phospho-(1D-myo-inositol) + CoA. The protein operates within lipid metabolism; phospholipid metabolism. Broad specificity membrane-bound O-acyltransferase that mediates the incorporation of unsaturated acyl chains into the sn-2 position of various lysophospholipids. Preferentially acylates lysophosphocholine (LPC), but also lysophosphoethanolamine (LPE), lysophosphatidylglycerol (LPG), lysophosphatidic acid (LPA), lysophosphoethanolamine (LPE), lysophosphoinositol (LPI), and lysophosphoserine (LPS). Prefers an acyl residue to an alkyl residue at the sn-1 position of lysophospholipid acceptors. Accepts acyl chains in acyl-CoA from C-2 to C-20, and shows strong preference for unsaturated acyl-CoAs with 16-20 carbons. Together with SLC1, plays a central role in phosphatidic acid (PA) biosynthesis. PA is the intermediate, from which all glycerophospholipids are synthesized. Can also introduce an acyl chain at the sn-1 position of the lysophosphatidylcholine analog 1-hydroxy-2-hexadecyl-sn-glycero-3-phosphocholine (HHPC). The sequence is that of Lysophospholipid acyltransferase from Saccharomyces cerevisiae (strain ATCC 204508 / S288c) (Baker's yeast).